A 67-amino-acid chain; its full sequence is Probable Sec-independent protein translocase protein TatE (67 aa).

A helical membrane pass occupies residues Met1 to Gly21. A disordered region spans residues Glu46–Asp67.

It belongs to the TatA/E family. TatE subfamily.

Its subcellular location is the cell inner membrane. In terms of biological role, part of the twin-arginine translocation (Tat) system that transports large folded proteins containing a characteristic twin-arginine motif in their signal peptide across membranes. TatE shares overlapping functions with TatA. This is Probable Sec-independent protein translocase protein TatE from Pantoea vagans (strain C9-1) (Pantoea agglomerans (strain C9-1)).